The sequence spans 196 residues: Holliday junction branch migration complex subunit RuvA (196 aa).

Residues 1 to 69 (MIVGLRGTII…EDAHLLFGFC (69 aa)) form a domain I region. The domain II stretch occupies residues 70 to 148 (EEIEKQTFER…QLLQSQEESI (79 aa)). The tract at residues 149–157 (APSNNLKYE) is flexible linker. A domain III region spans residues 157-196 (EASLALQSLGFKRNEIQKVLEHIEALSVSEIVKEALKRLA).

Belongs to the RuvA family. In terms of assembly, homotetramer. Forms an RuvA(8)-RuvB(12)-Holliday junction (HJ) complex. HJ DNA is sandwiched between 2 RuvA tetramers; dsDNA enters through RuvA and exits via RuvB. An RuvB hexamer assembles on each DNA strand where it exits the tetramer. Each RuvB hexamer is contacted by two RuvA subunits (via domain III) on 2 adjacent RuvB subunits; this complex drives branch migration. In the full resolvosome a probable DNA-RuvA(4)-RuvB(12)-RuvC(2) complex forms which resolves the HJ.

It is found in the cytoplasm. In terms of biological role, the RuvA-RuvB-RuvC complex processes Holliday junction (HJ) DNA during genetic recombination and DNA repair, while the RuvA-RuvB complex plays an important role in the rescue of blocked DNA replication forks via replication fork reversal (RFR). RuvA specifically binds to HJ cruciform DNA, conferring on it an open structure. The RuvB hexamer acts as an ATP-dependent pump, pulling dsDNA into and through the RuvAB complex. HJ branch migration allows RuvC to scan DNA until it finds its consensus sequence, where it cleaves and resolves the cruciform DNA. In Helicobacter hepaticus (strain ATCC 51449 / 3B1), this protein is Holliday junction branch migration complex subunit RuvA.